The chain runs to 158 residues: Molybdopterin synthase catalytic subunit (158 aa).

Residues 107–108 (HR), K123, and 130–132 (KKE) each bind substrate.

Belongs to the MoaE family. MOCS2B subfamily. As to quaternary structure, heterotetramer; composed of 2 small (mocs2s) and 2 large (mocs2l) subunits.

It is found in the cytoplasm. It carries out the reaction 2 [molybdopterin-synthase sulfur-carrier protein]-C-terminal-Gly-aminoethanethioate + cyclic pyranopterin phosphate + H2O = molybdopterin + 2 [molybdopterin-synthase sulfur-carrier protein]-C-terminal Gly-Gly + 2 H(+). The protein operates within cofactor biosynthesis; molybdopterin biosynthesis. Its function is as follows. Catalytic subunit of the molybdopterin synthase complex, a complex that catalyzes the conversion of precursor Z into molybdopterin. Acts by mediating the incorporation of 2 sulfur atoms from thiocarboxylated mocs2s into precursor Z to generate a dithiolene group. This chain is Molybdopterin synthase catalytic subunit (mocs2l), found in Dictyostelium discoideum (Social amoeba).